A 274-amino-acid chain; its full sequence is MAAAGSATRRVGFVGAGRMAGAIAQGLIRAGKVEAQRIVASAPTDRNLCHFQALGCQTTHSNQEVLQSCLLVIFATKPHILPAVVAEVAPVVTAEHILVSVAAGVSLSTLEELLPPNTRVLRVLPNLPCVVQEGAIVMARGRHVGSSETKLLQHLLEACGRCEEVPEAYVDIHTGLSGSGVAFVCAFSEALAEGAIKMGMPSSLAHRIAAQTLLGTAKMLLHEGQHPAQLRSDVCTPGGTTIYGLHALEQGGLRAATMSAVEAATCRARELSRK.

A2 is subject to N-acetylalanine.

It belongs to the pyrroline-5-carboxylate reductase family. In terms of assembly, homodecamer; composed of 5 homodimers.

The protein resides in the cytoplasm. The enzyme catalyses L-proline + NADP(+) = (S)-1-pyrroline-5-carboxylate + NADPH + 2 H(+). It catalyses the reaction L-proline + NAD(+) = (S)-1-pyrroline-5-carboxylate + NADH + 2 H(+). It functions in the pathway amino-acid biosynthesis; L-proline biosynthesis; L-proline from L-glutamate 5-semialdehyde: step 1/1. Oxidoreductase that catalyzes the last step in proline biosynthesis, which corresponds to the reduction of pyrroline-5-carboxylate (P5C) to L-proline using NAD(P)H. Proline is synthesized from either glutamate or ornithine; both are converted to P5C, and then to proline via pyrroline-5-carboxylate reductases (PYCRs). PYCR3 is exclusively linked to the biosynthesis of proline from ornithine. The chain is Pyrroline-5-carboxylate reductase 3 from Macaca fascicularis (Crab-eating macaque).